The primary structure comprises 62 residues: Antitoxin VbhA (62 aa).

Positions serine 20 to glycine 25 match the Inhibitory (S/T)XXXE(G/N) motif motif. Glutamate 24 contacts ATP.

As to quaternary structure, interacts with VbhT.

In terms of biological role, antitoxin component of type II toxin-antitoxin (TA) system VbhT-VbhA. Acts by inhibiting the adenylyltransferase activity of VbhT; competes with ATP-binding and prevents productive ATP-binding to VbhT. The polypeptide is Antitoxin VbhA (Bartonella schoenbuchensis (strain DSM 13525 / NCTC 13165 / R1)).